The sequence spans 4563 residues: Apolipoprotein B-100 (4563 aa).

The signal sequence occupies residues 1 to 27; sequence MDPPRPALLALLALPALLLLLLAGARA. A heparin-binding region spans residues 32-126; it reads LENVSLVCPK…KNSEEFAAAM (95 aa). Asn34 carries an N-linked (GlcNAc...) asparagine glycan. Disulfide bonds link Cys39–Cys88 and Cys78–Cys97. A Vitellogenin domain is found at 46 to 672; that stretch reads FKHLRKYTYN…PNNYLPKESM (627 aa). Asn185 is a glycosylation site (N-linked (GlcNAc...) asparagine). Disulfide bonds link Cys186/Cys212, Cys245/Cys261, Cys385/Cys390, and Cys478/Cys513. The segment at 232–306 is heparin-binding; that stretch reads TRPLSTLISS…RFFGEGTKKM (75 aa). The interval 902–959 is heparin-binding; it reads NTNFFHESGLEAHVALKAGKLKFIIPSPKRPVKLLSGGNTLHLVSTTKTEVIPPLIEN. A disulfide bond links Cys966 and Cys976. A glycan (N-linked (GlcNAc...) asparagine) is linked at Asn983. Cys1112 carries S-palmitoyl cysteine lipidation. 3 N-linked (GlcNAc...) asparagine glycosylation sites follow: Asn1368, Asn1377, and Asn1523. The residue at position 2004 (Lys2004) is an N6-acetyllysine. Positions 2043–2178 are heparin-binding; it reads RDAVEKPQEF…EKLSQLQTYM (136 aa). N-linked (GlcNAc...) asparagine glycosylation is found at Asn2239, Asn2560, Asn2779, Asn2982, and Asn3101. The tract at residues 3161–3236 is heparin-binding; that stretch reads FLKTTKQSFD…KIKFDKYKAE (76 aa). The interval 3174–3184 is basic (possible receptor binding region); that stretch reads KAQYKKNKHRH. Cys3194 and Cys3324 form a disulfide bridge. Residue Asn3224 is glycosylated (N-linked (GlcNAc...) asparagine). The residue at position 3279 (Ser3279) is a Phosphoserine. Asn3336 and Asn3358 each carry an N-linked (GlcNAc...) asparagine glycan. An LDL receptor binding region spans residues 3373 to 3393; that stretch reads VIDALQYKLEGTTRLTRKRGL. The heparin-binding stretch occupies residues 3383-3516; sequence GTTRLTRKRG…REYSGTIASE (134 aa). Residues 3386-3394 are basic (possible receptor binding region); the sequence is RLTRKRGLK. N-linked (GlcNAc...) asparagine glycosylation is found at Asn3411, Asn3465, and Asn3895. The residue at position 4048 (Ser4048) is a Phosphoserine; by FAM20C. Thr4052 carries the phosphothreonine modification. Residues Asn4237 and Asn4431 are each glycosylated (N-linked (GlcNAc...) asparagine).

Interacts with PCSK9. Interacts with MTTP. Interacts with AUP1. Interacts with CIDEB. Post-translationally, palmitoylated; structural requirement for proper assembly of the hydrophobic core of the lipoprotein particle.

Its subcellular location is the cytoplasm. The protein resides in the secreted. It localises to the lipid droplet. Its function is as follows. Apolipoprotein B is a major protein constituent of chylomicrons (apo B-48), LDL (apo B-100) and VLDL (apo B-100). Apo B-100 functions as a recognition signal for the cellular binding and internalization of LDL particles by the apoB/E receptor. This is Apolipoprotein B-100 (APOB) from Homo sapiens (Human).